A 234-amino-acid chain; its full sequence is uncharacterized protein (234 aa).

Helical transmembrane passes span 20 to 40 and 176 to 196; these read LILLITIGVTLIMGFVQFKVI and VMAFGAAVMGGITLAFFLHFL.

Belongs to the CpsC/CapA family.

The protein localises to the cell membrane. This is an uncharacterized protein from Bacillus subtilis (strain 168).